Consider the following 154-residue polypeptide: Actin-related protein 2/3 complex subunit 5 (154 aa).

Threonine 142 carries the post-translational modification Phosphothreonine.

It belongs to the ARPC5 family. As to quaternary structure, component of the Arp2/3 complex composed of ARP2, ARP3, ARC40/p41-ARC, ARC35/p34-ARC, ARC18/p21-ARC, ARC19/p20-ARC and ARC16/p16-ARC.

Its subcellular location is the cytoplasm. It localises to the cytoskeleton. The protein resides in the actin patch. Functions as a component of the Arp2/3 complex which is involved in regulation of actin polymerization and together with an activating nucleation-promoting factor (NPF) mediates the formation of branched actin networks. The chain is Actin-related protein 2/3 complex subunit 5 (ARC15) from Saccharomyces cerevisiae (strain ATCC 204508 / S288c) (Baker's yeast).